Reading from the N-terminus, the 404-residue chain is Serine/threonine-protein phosphatase 2A regulatory subunit rsa-1 (404 aa).

In terms of assembly, part of a complex consisting of a common heterodimeric core enzyme, composed of catalytic subunit let-92 and constant regulatory subunit paa-1, that associates with a variety of regulatory subunits which confer distinct properties to the holoenzyme. Interacts with rsa-2, spd-5 and tpxl-1.

Its subcellular location is the cytoplasm. It is found in the cytoskeleton. The protein localises to the microtubule organizing center. The protein resides in the centrosome. Functionally, regulatory subunit of phosphatase let-92 which recruits let-92/paa-1 complex to the centrosomes, thereby regulating microtubule outgrowth from centrosomes and mitotic spindle assembly ensuring the stability of kinetochore microtubules. The polypeptide is Serine/threonine-protein phosphatase 2A regulatory subunit rsa-1 (Caenorhabditis elegans).